A 438-amino-acid polypeptide reads, in one-letter code: Phosphoribosylamine--glycine ligase (438 aa).

Residues 108–316 (REFMERNNIP…LLEIAKGIVE (209 aa)) enclose the ATP-grasp domain. 135–194 (IDEYGKPVVVKPLGLTGGKGVKVVGYQLKDNEEAKEYAEHIIRKDGKVLIEERTDGVEFT) provides a ligand contact to ATP. Positions 274, 286, and 288 each coordinate Mg(2+). Residues Gln274, Glu286, and Asn288 each contribute to the Mn(2+) site.

The protein belongs to the GARS family. It depends on Mg(2+) as a cofactor. Requires Mn(2+) as cofactor.

The catalysed reaction is 5-phospho-beta-D-ribosylamine + glycine + ATP = N(1)-(5-phospho-beta-D-ribosyl)glycinamide + ADP + phosphate + H(+). It participates in purine metabolism; IMP biosynthesis via de novo pathway; N(1)-(5-phospho-D-ribosyl)glycinamide from 5-phospho-alpha-D-ribose 1-diphosphate: step 2/2. This is Phosphoribosylamine--glycine ligase from Pyrococcus horikoshii (strain ATCC 700860 / DSM 12428 / JCM 9974 / NBRC 100139 / OT-3).